A 209-amino-acid chain; its full sequence is Xanthine phosphoribosyltransferase 1 (209 aa).

Ser79 bears the Phosphoserine mark.

The protein localises to the cytoplasm. May act as a xanthine phosphoribosyltransferase involved in the synthesis of purine nucleotides. Such activity is however unclear in vivo. The sequence is that of Xanthine phosphoribosyltransferase 1 (XPT1) from Saccharomyces cerevisiae (strain ATCC 204508 / S288c) (Baker's yeast).